We begin with the raw amino-acid sequence, 502 residues long: Lysine--tRNA ligase (502 aa).

Positions 413 and 420 each coordinate Mg(2+).

This sequence belongs to the class-II aminoacyl-tRNA synthetase family. In terms of assembly, homodimer. The cofactor is Mg(2+).

It is found in the cytoplasm. It catalyses the reaction tRNA(Lys) + L-lysine + ATP = L-lysyl-tRNA(Lys) + AMP + diphosphate. The protein is Lysine--tRNA ligase of Haemophilus influenzae (strain 86-028NP).